Here is a 354-residue protein sequence, read N- to C-terminus: MLFNLKNLYRITKLTQNSKHLPRHFCRGPPNQMNVCLKGRDLLTLQNYTADELKYLLWVASDLKQRIKDKGEYLPLMQGKSLAMIFEKRSTRTRLSAETGFALLGGHSSFLTKQDIHLGTNESLTDTARVLSSMTNAILARVYKHNDLDLMTKEATIPVINGLSDLYHPLQILADYLTLQEHYGGLNGLTIAWIGDGNNVLHSIMTSAAKLGMHLRIATPKGFEPDLRITKVTEQYSKEYGTRLLLTTDPLEAANGANVLVTDTWISMGQEEEKRRRLKAFQGYQITMQTVQSAASNWTFLHCLPRKPEEVDDEVFYSPRSLVFQEAENRKWTIMAVMVSLLTDYSPQLQMPTF.

The transit peptide at 1–32 (MLFNLKNLYRITKLTQNSKHLPRHFCRGPPNQ) directs the protein to the mitochondrion. Carbamoyl phosphate contacts are provided by residues 90–94 (STRTR), arginine 141, and histidine 168. Arginine 141 contributes to the L-ornithine binding site. L-ornithine-binding positions include asparagine 199, 263–267 (DTWIS), 302–305 (HCLP), and arginine 330. Cysteine 303 is an active-site residue. Arginine 330 contacts carbamoyl phosphate.

Belongs to the aspartate/ornithine carbamoyltransferase superfamily. OTCase family. In terms of assembly, homotrimer. In terms of processing, cleavage of the precursor form to the active form occurs only in the kidney. In terms of tissue distribution, expressed in kidney, brain, heart, liver, pancreas, gizzard, small intestine and breast muscle. More abundant in mitochondrion-rich organs (heart, liver and brain) than in other organs. Activity is only detected in the kidney.

The protein localises to the mitochondrion matrix. The enzyme catalyses carbamoyl phosphate + L-ornithine = L-citrulline + phosphate + H(+). It participates in nitrogen metabolism; urea cycle; L-citrulline from L-ornithine and carbamoyl phosphate: step 1/1. With respect to regulation, inhibition by ornithine increases at higher pH. Functionally, catalyzes the second step of the urea cycle, the condensation of carbamoyl phosphate with L-ornithine to form L-citrulline. The urea cycle ensures the detoxification of ammonia by converting it to urea for excretion. This Gallus gallus (Chicken) protein is Ornithine transcarbamylase, mitochondrial.